The sequence spans 223 residues: ATP phosphoribosyltransferase (223 aa).

This sequence belongs to the ATP phosphoribosyltransferase family. Short subfamily. In terms of assembly, heteromultimer composed of HisG and HisZ subunits.

It is found in the cytoplasm. The catalysed reaction is 1-(5-phospho-beta-D-ribosyl)-ATP + diphosphate = 5-phospho-alpha-D-ribose 1-diphosphate + ATP. It participates in amino-acid biosynthesis; L-histidine biosynthesis; L-histidine from 5-phospho-alpha-D-ribose 1-diphosphate: step 1/9. Functionally, catalyzes the condensation of ATP and 5-phosphoribose 1-diphosphate to form N'-(5'-phosphoribosyl)-ATP (PR-ATP). Has a crucial role in the pathway because the rate of histidine biosynthesis seems to be controlled primarily by regulation of HisG enzymatic activity. The protein is ATP phosphoribosyltransferase of Bordetella pertussis (strain Tohama I / ATCC BAA-589 / NCTC 13251).